Here is a 117-residue protein sequence, read N- to C-terminus: Shadow of prion protein (117 aa).

The N-terminal stretch at 1–24 (MRQRVACCWVLLLLAATFCQPAAA) is a signal peptide. N-linked (GlcNAc...) asparagine glycosylation is present at Asn-87. Ala-104 is lipidated: GPI-anchor amidated alanine. Residues 105–117 (MPWLCPLAAILHH) constitute a propeptide, removed in mature form.

This sequence belongs to the SPRN family.

The protein resides in the cell membrane. Prion-like protein that has PrP(C)-like neuroprotective activity. The sequence is that of Shadow of prion protein (SPRN) from Gallus gallus (Chicken).